Here is a 1235-residue protein sequence, read N- to C-terminus: ATP-dependent DNA helicase mph1 (1235 aa).

Disordered regions lie at residues 20–78 (LTQA…YRIH) and 96–148 (DEMP…VHSP). Over residues 61-72 (SRSDNDEADEKK) the composition is skewed to basic and acidic residues. The span at 137 to 148 (AKTQKQNIVHSP) shows a compositional bias: polar residues. A Helicase ATP-binding domain is found at 272-440 (IVHKGLFNNL…EVIDNLEIAE (169 aa)). Position 285–292 (285–292 (LPTGLGKT)) interacts with ATP. The DEAH box signature appears at 388–391 (DEAH). The region spanning 608-784 (KLTYLCDTVL…GSRFTFRHDL (177 aa)) is the Helicase C-terminal domain. 3 disordered regions span residues 808-827 (NTQD…RKKL), 944-1117 (SRLQ…PPLM), and 1144-1235 (TGAK…DSDE). The segment covering 947-958 (QRPEDRDNKPYG) has biased composition (basic and acidic residues). Residues 1015–1027 (VAPKKAKPRRGRA) are compositionally biased toward basic residues. The span at 1065 to 1074 (PGERVDRTSD) shows a compositional bias: basic and acidic residues. Residues 1075-1085 (MEELEADDDSD) are compositionally biased toward acidic residues. Composition is skewed to polar residues over residues 1095-1114 (PTQT…SSSP) and 1146-1159 (AKNS…MTQE). A compositionally biased stretch (low complexity) spans 1160-1170 (SSDGGDSMDSD). Residues 1194 to 1209 (PSSSVFSSGQKATPNM) are compositionally biased toward polar residues.

The protein belongs to the DEAD box helicase family. DEAH subfamily. FANCM sub-subfamily. As to quaternary structure, interacts with the MHF histone-fold complex to form the FANCM-MHF complex.

The protein localises to the nucleus. It carries out the reaction ATP + H2O = ADP + phosphate + H(+). Functionally, ATP-dependent DNA helicase involved in DNA damage repair by homologous recombination and in genome maintenance. Capable of unwinding D-loops. Plays a role in limiting crossover recombinants during mitotic DNA double-strand break (DSB) repair. Component of a FANCM-MHF complex which promotes gene conversion at blocked replication forks, probably by reversal of the stalled fork. The chain is ATP-dependent DNA helicase mph1 from Sclerotinia sclerotiorum (strain ATCC 18683 / 1980 / Ss-1) (White mold).